Consider the following 35-residue polypeptide: ANKRPVWIMGHMVNAVYQIDEFVNLGANSIDTDVS.

His-11 is an active-site residue. Asp-33 lines the Mg(2+) pocket.

This sequence belongs to the arthropod phospholipase D family. Class II subfamily. Requires Mg(2+) as cofactor. Post-translationally, contains 2 disulfide bonds. As to expression, expressed by the venom gland.

The protein resides in the secreted. The enzyme catalyses an N-(acyl)-sphingosylphosphocholine = an N-(acyl)-sphingosyl-1,3-cyclic phosphate + choline. It carries out the reaction an N-(acyl)-sphingosylphosphoethanolamine = an N-(acyl)-sphingosyl-1,3-cyclic phosphate + ethanolamine. It catalyses the reaction a 1-acyl-sn-glycero-3-phosphocholine = a 1-acyl-sn-glycero-2,3-cyclic phosphate + choline. The catalysed reaction is a 1-acyl-sn-glycero-3-phosphoethanolamine = a 1-acyl-sn-glycero-2,3-cyclic phosphate + ethanolamine. In terms of biological role, dermonecrotic toxins cleave the phosphodiester linkage between the phosphate and headgroup of certain phospholipids (sphingolipid and lysolipid substrates), forming an alcohol (often choline) and a cyclic phosphate. This toxin acts on sphingomyelin (SM). It may also act on ceramide phosphoethanolamine (CPE), lysophosphatidylcholine (LPC) and lysophosphatidylethanolamine (LPE), but not on lysophosphatidylserine (LPS), and lysophosphatidylglycerol (LPG). It acts by transphosphatidylation, releasing exclusively cyclic phosphate products as second products. Induces dermonecrosis, hemolysis, increased vascular permeability, edema, inflammatory response, and platelet aggregation. The chain is Dermonecrotic toxin LrSicTox-alphaI-1 from Loxosceles reclusa (Brown recluse spider).